A 444-amino-acid polypeptide reads, in one-letter code: C4-dicarboxylate transport protein (444 aa).

Transmembrane regions (helical) follow at residues 15-35, 46-66, 78-98, 143-163, 199-219, 224-244, 291-311, 332-352, and 354-374; these read VIVA…FGVA, LIKM…IAGM, YALL…LIVV, IVGA…VIFG, PIGA…GSLV, LMIC…GGIA, VVGL…AIYL, ITLL…TGSG, and IVLA…LALI. The interval 422 to 444 is disordered; it reads GIADTRPEDDLGVAEGPTPSNVK.

Belongs to the dicarboxylate/amino acid:cation symporter (DAACS) (TC 2.A.23) family.

It localises to the cell inner membrane. Functionally, responsible for the transport of dicarboxylates such as succinate, fumarate, and malate from the periplasm across the membrane. This Pseudomonas fluorescens (strain Pf0-1) protein is C4-dicarboxylate transport protein.